We begin with the raw amino-acid sequence, 152 residues long: Deoxyuridine 5'-triphosphate nucleotidohydrolase (152 aa).

Residues 71 to 73 (RSG), asparagine 84, 88 to 90 (LID), and methionine 98 contribute to the substrate site.

This sequence belongs to the dUTPase family. The cofactor is Mg(2+).

The enzyme catalyses dUTP + H2O = dUMP + diphosphate + H(+). It participates in pyrimidine metabolism; dUMP biosynthesis; dUMP from dCTP (dUTP route): step 2/2. Functionally, this enzyme is involved in nucleotide metabolism: it produces dUMP, the immediate precursor of thymidine nucleotides and it decreases the intracellular concentration of dUTP so that uracil cannot be incorporated into DNA. This chain is Deoxyuridine 5'-triphosphate nucleotidohydrolase, found in Shewanella sp. (strain MR-7).